Consider the following 235-residue polypeptide: Germin-like protein 1-4 (235 aa).

Residues Met-1–Ala-27 form the signal peptide. Cys-37 and Cys-55 are joined by a disulfide. Asn-60 carries N-linked (GlcNAc...) asparagine glycosylation. One can recognise a Cupin type-1 domain in the interval Pro-69–Glu-226. Mn(2+)-binding residues include His-120, His-122, Glu-127, and His-171.

Belongs to the germin family. In terms of assembly, oligomer (believed to be a pentamer but probably hexamer).

It is found in the secreted. Its subcellular location is the extracellular space. The protein resides in the apoplast. In terms of biological role, may play a role in plant defense. Probably has no oxalate oxidase activity even if the active site is conserved. This Oryza sativa subsp. japonica (Rice) protein is Germin-like protein 1-4.